Reading from the N-terminus, the 711-residue chain is Hydroperoxide isomerase ALOXE3 (711 aa).

In terms of domain architecture, PLAT spans 2–119 (AVYRLCVTTG…TVELRPGTAR (118 aa)). The Lipoxygenase domain maps to 120–711 (TICQDSLPLL…PPLIENSVSI (592 aa)). The Fe cation site is built by His-408, His-413, His-588, Asn-592, and Ile-711.

Belongs to the lipoxygenase family. Requires Fe cation as cofactor. In terms of tissue distribution, predominantly expressed in skin.

Its subcellular location is the cytoplasm. The enzyme catalyses a hydroperoxyeicosatetraenoate = a hydroxy-epoxy-eicosatetraenoate. It catalyses the reaction (12R)-hydroperoxy-(5Z,8Z,10E,14Z)-eicosatetraenoate = (8R)-hydroxy-(11R,12R)-epoxy-(5Z,9E,14Z)-eicosatrienoate. It carries out the reaction (12S)-hydroperoxy-(5Z,8Z,10E,14Z)-eicosatetraenoate = (8R)-hydroxy-(11S,12S)-epoxy-(5Z,9E,14Z)-eicosatrienoate. The catalysed reaction is (12S)-hydroperoxy-(5Z,8Z,10E,14Z)-eicosatetraenoate = (10R)-hydroxy-(11S,12S)-epoxy-(5Z,8Z,14Z)-eicosatrienoate. The enzyme catalyses (15S)-hydroperoxy-(5Z,8Z,11Z,13E)-eicosatetraenoate = (13R)-hydroxy-(14S,15S)-epoxy-(5Z,8Z,11Z)-eicosatrienoate. It catalyses the reaction (5S)-hydroperoxy-(6E,8Z,11Z,14Z)-eicosatetraenoate = 7R-hydroxy-5S,6S-epoxy-(8Z,11Z,14Z)-eicosatrienoate. It carries out the reaction (13S)-hydroperoxy-(9Z,11E)-octadecadienoate = 11-hydroxy-(12S,13S)-epoxy-(9Z)-octadecenoate. The catalysed reaction is N-[omega-(9R)-hydroperoxy-(10E,12Z)-octadecadienoyloxy]acyl-beta-D-glucosyl-(1&lt;-&gt;1)-octadecasphing-4E-enine = a N-[omega-(9R,10R)-epoxy-(13R)-hydroxy-(11E)-octadecenoyloxy]acyl-beta-D-glucosyl-(1&lt;-&gt;1)-sphing-4E-enine. The enzyme catalyses a N-[omega-(9R)-hydroperoxy-(10E,12Z)-octadecadienoyloxy]-acylsphin-4E-enine = a N-[omega-(9R,10R)-epoxy-(13R)-hydroxy-(11E)-octadecenoyloxy]-acylsphing-4E-enine. It catalyses the reaction a hydroperoxyeicosatetraenoate = an oxoeicosatetraenoate + H2O. It carries out the reaction (12R)-hydroperoxy-(5Z,8Z,10E,14Z)-eicosatetraenoate = 12-oxo-(5Z,8Z,10E,14Z)-eicosatetraenoate + H2O. The catalysed reaction is (12S)-hydroperoxy-(5Z,8Z,10E,14Z)-eicosatetraenoate = 12-oxo-(5Z,8Z,10E,14Z)-eicosatetraenoate + H2O. The enzyme catalyses (15S)-hydroperoxy-(5Z,8Z,11Z,13E)-eicosatetraenoate = 15-oxo-(5Z,8Z,11Z,13E)-eicosatetraenoate + H2O. It catalyses the reaction (13S)-hydroperoxy-(9Z,11E)-octadecadienoate = 13-oxo-(9Z,11E)-octadecadienoate + H2O. It carries out the reaction (8S)-hydroperoxy-(5Z,9E,11Z,14Z)-eicosatetraenoate = (10R)-hydroxy-(8S,9S)-epoxy-(5Z,11Z,14Z)-eicosatrienoate. The catalysed reaction is (8R)-hydroperoxy-(5Z,9E,11Z,14Z)-eicosatetraenoate = 8-oxo-(5Z,9E,11Z,14Z)-eicosatetraenoate + H2O. The enzyme catalyses (8S)-hydroperoxy-(5Z,9E,11Z,14Z)-eicosatetraenoate = 8-oxo-(5Z,9E,11Z,14Z)-eicosatetraenoate + H2O. It participates in lipid metabolism; hydroperoxy eicosatetraenoic acid biosynthesis. Its pathway is lipid metabolism; sphingolipid metabolism. Lipoxygenase activity is activated by 13(S)-HPODE leading to an active free ferric enzyme. The lipoxygenase and hydroperoxide isomerase activities are in competition and are reciprocally regulated by oxygen. The oxygen reacts with an epoxyallylic radical intermediate leading to an epoxyallylic peroxyl radical, which, due to its limited reactivity within the enzyme active site, it dissociates and leaves the enzyme in the activated free ferric state. In terms of biological role, non-heme iron-containing lipoxygenase which is atypical in that it displays a prominent hydroperoxide isomerase activity and a reduced lipoxygenases activity. The hydroperoxide isomerase activity catalyzes the isomerization of hydroperoxides, derived from arachidonic and linoleic acid by ALOX12B, into hepoxilin-type epoxyalcohols and ketones. In presence of oxygen, oxygenates polyunsaturated fatty acids, including arachidonic acid, to produce fatty acid hydroperoxides. In the skin, acts downstream of ALOX12B on the linoleate moiety of esterified omega-hydroxyacyl-sphingosine (EOS) ceramides to produce an epoxy-ketone derivative, a crucial step in the conjugation of omega-hydroxyceramide to membrane proteins. Therefore plays a crucial role in the synthesis of corneocytes lipid envelope and the establishment of the skin barrier to water loss. In parallel, it may have a signaling function in barrier formation through the production of hepoxilins metabolites. Also plays a role in adipocyte differentiation through hepoxilin A3 and hepoxilin B3 production which in turn activate PPARG. Through the production of hepoxilins in the spinal cord, it may regulate inflammatory tactile allodynia. This Homo sapiens (Human) protein is Hydroperoxide isomerase ALOXE3.